The following is a 441-amino-acid chain: MLLPGPARQPPTPQPVQHPGLRRQVEPPGQLLRLFYCTVLVCSKEISALTDFSGYLTKLLQNHTTYACDGDYLNLQCPRHSTISVQSAFYGQDYQMCSSQKPASQREDSLTCVAATTFQKVLDECQNQRACHLLVNSRVFGPDLCPGSSKYLLVSFKCQPNELKNKTVCEDQELKLHCHESKFLNIYSATYGRRTQERDICSSEAERLPPFDCLSYSALQVLSRRCYGKQRCKIIVNNHHFGSPCLPGVKKYLTVTYACVPKNILTAIDPAIANLKPSLKQKDGEYGINFDPSGSKVPRKDGILVSNSLAAFAYIRAHPERAALLFVSSVCIGLALTLCALVIRESCAKDFRDLQLGREQLVPGSDKVEEDSEDEEEEEDSSESDFPGELSGFCRTSYPVYSSIEAAELAERIERREQIIQEIWMNSGLDTSLPRNMGQFY.

The disordered stretch occupies residues 1–23 (MLLPGPARQPPTPQPVQHPGLRR). The signal sequence occupies residues 1–48 (MLLPGPARQPPTPQPVQHPGLRRQVEPPGQLLRLFYCTVLVCSKEISA). Residues 7 to 16 (ARQPPTPQPV) are compositionally biased toward pro residues. Over 49-322 (LTDFSGYLTK…AYIRAHPERA (274 aa)) the chain is Extracellular. The N-linked (GlcNAc...) asparagine glycan is linked to Asn-62. Residues 67–159 (ACDGDYLNLQ…KYLLVSFKCQ (93 aa)) form the SUEL-type lectin 1 domain. N-linked (GlcNAc...) asparagine glycosylation is present at Asn-165. Residues 168-260 (VCEDQELKLH…KYLTVTYACV (93 aa)) form the SUEL-type lectin 2 domain. Residues 323-343 (ALLFVSSVCIGLALTLCALVI) traverse the membrane as a helical segment. Residues 344–441 (RESCAKDFRD…SLPRNMGQFY (98 aa)) are Cytoplasmic-facing. The interval 362-391 (VPGSDKVEEDSEDEEEEEDSSESDFPGELS) is disordered. Residues 368-383 (VEEDSEDEEEEEDSSE) show a composition bias toward acidic residues.

Belongs to the EVA1 family.

It localises to the cell membrane. In terms of biological role, binds heparin. The chain is Protein eva-1 homolog C (EVA1C) from Pan troglodytes (Chimpanzee).